The sequence spans 811 residues: DNA mismatch repair protein MutS (811 aa).

Residue 595-602 (GPNMSGKS) coordinates ATP.

This sequence belongs to the DNA mismatch repair MutS family.

This protein is involved in the repair of mismatches in DNA. It is possible that it carries out the mismatch recognition step. This protein has a weak ATPase activity. The protein is DNA mismatch repair protein MutS of Pseudothermotoga lettingae (strain ATCC BAA-301 / DSM 14385 / NBRC 107922 / TMO) (Thermotoga lettingae).